The following is a 900-amino-acid chain: Protein translocase subunit SecA (900 aa).

ATP-binding positions include Gln87, Gly105 to Thr109, and Asp510. The tract at residues Asp857–Lys890 is disordered. Over residues Asp860–Gly872 the composition is skewed to low complexity. The Zn(2+) site is built by Cys884, Cys886, Cys895, and His896.

It belongs to the SecA family. As to quaternary structure, monomer and homodimer. Part of the essential Sec protein translocation apparatus which comprises SecA, SecYEG and auxiliary proteins SecDF-YajC and YidC. The cofactor is Zn(2+).

The protein localises to the cell inner membrane. It localises to the cytoplasm. The catalysed reaction is ATP + H2O + cellular proteinSide 1 = ADP + phosphate + cellular proteinSide 2.. Part of the Sec protein translocase complex. Interacts with the SecYEG preprotein conducting channel. Has a central role in coupling the hydrolysis of ATP to the transfer of proteins into and across the cell membrane, serving both as a receptor for the preprotein-SecB complex and as an ATP-driven molecular motor driving the stepwise translocation of polypeptide chains across the membrane. This chain is Protein translocase subunit SecA, found in Marinomonas sp. (strain MWYL1).